The primary structure comprises 1047 residues: Ribonucleoside-diphosphate reductase subunit alpha (1047 aa).

ATP-cone domains are found at residues 9 to 111 (CTIV…KAHR), 118 to 219 (LSVV…ARVR), and 237 to 327 (VEVL…EALG). Residues T442, 457-458 (SC), G486, 670-674 (NLCTE), and 857-861 (PTATI) each bind substrate. C458 and C687 are disulfide-bonded. N670 acts as the Proton acceptor in catalysis. The Cysteine radical intermediate role is filled by C672. The active-site Proton acceptor is E674.

The protein belongs to the ribonucleoside diphosphate reductase large chain family. Tetramer of two alpha and two beta subunits.

It carries out the reaction a 2'-deoxyribonucleoside 5'-diphosphate + [thioredoxin]-disulfide + H2O = a ribonucleoside 5'-diphosphate + [thioredoxin]-dithiol. With respect to regulation, under complex allosteric control mediated by deoxynucleoside triphosphates and ATP binding. The type of nucleotide bound at the specificity site determines substrate preference. It seems probable that ATP makes the enzyme reduce CDP and UDP, dGTP favors ADP reduction and dTTP favors GDP reduction. In terms of biological role, provides the precursors necessary for DNA synthesis. Catalyzes the biosynthesis of deoxyribonucleotides from the corresponding ribonucleotides. This chain is Ribonucleoside-diphosphate reductase subunit alpha (nrdA), found in Chlamydia trachomatis serovar D (strain ATCC VR-885 / DSM 19411 / UW-3/Cx).